Consider the following 244-residue polypeptide: 5-oxoprolinase subunit A (244 aa).

The protein belongs to the LamB/PxpA family. In terms of assembly, forms a complex composed of PxpA, PxpB and PxpC.

It carries out the reaction 5-oxo-L-proline + ATP + 2 H2O = L-glutamate + ADP + phosphate + H(+). In terms of biological role, catalyzes the cleavage of 5-oxoproline to form L-glutamate coupled to the hydrolysis of ATP to ADP and inorganic phosphate. This chain is 5-oxoprolinase subunit A, found in Salmonella heidelberg (strain SL476).